A 528-amino-acid chain; its full sequence is Protein arginine N-methyltransferase 3 (528 aa).

A disordered region spans residues M1–R43. Residue C2 is modified to N-acetylcysteine. Phosphoserine is present on residues S22 and S24. Over residues D23–T37 the composition is skewed to acidic residues. The C2H2-type zinc-finger motif lies at T46 to H69. The residue at position 169 (S169) is a Phosphoserine. The tract at residues M184–Q528 is mediates interaction with ALDH1A1. An SAM-dependent MTase PRMT-type domain is found at D214–Q528. Residues R236, G260, D282, S284, I310, and E311 each coordinate S-adenosyl-L-homocysteine. Catalysis depends on residues E326 and E335.

The protein belongs to the class I-like SAM-binding methyltransferase superfamily. Protein arginine N-methyltransferase family. As to quaternary structure, monomer and homodimer. Interacts with EPB41L3 (via FERM domain); the interaction is direct and inhibits the protein-arginine N-methyltransferase activity of PRMT3. Interacts with the 40S ribosomal protein RPS2. Interacts with ALDH1A1; the interaction is direct, inhibits ALDH1A1 aldehyde dehydrogenase activity and is independent of the methyltransferase activity of PRMT3.

The protein resides in the cytoplasm. Its subcellular location is the cytosol. The protein localises to the nucleus. The enzyme catalyses L-arginyl-[protein] + S-adenosyl-L-methionine = N(omega)-methyl-L-arginyl-[protein] + S-adenosyl-L-homocysteine + H(+). It catalyses the reaction L-arginyl-[protein] + 2 S-adenosyl-L-methionine = N(omega),N(omega)-dimethyl-L-arginyl-[protein] + 2 S-adenosyl-L-homocysteine + 2 H(+). With respect to regulation, inhibited by N-ethylmaleimide and high concentrations of zinc chloride. Functionally, protein-arginine N-methyltransferase that catalyzes both the monomethylation and asymmetric dimethylation of the guanidino nitrogens of arginine residues in target proteins, and therefore falls into the group of type I methyltransferases. Catalyzes the asymmetric arginine dimethylation at multiple sites in the Arg/Gly-rich region of small ribosomal subunit protein uS5/RPS2. Also appears to methylate other ribosomal proteins. May regulate retinoic acid synthesis and signaling by inhibiting ALDH1A1 retinal dehydrogenase activity. Contributes to methylation of histone H4 'Arg-3', a specific tag for epigenetic transcriptional activation. Promotes osteogenesis. This Mus musculus (Mouse) protein is Protein arginine N-methyltransferase 3.